A 156-amino-acid polypeptide reads, in one-letter code: 6,7-dimethyl-8-ribityllumazine synthase (156 aa).

5-amino-6-(D-ribitylamino)uracil-binding positions include Phe22, 57-59, and 81-83; these read AYE and TVI. 86–87 contacts (2S)-2-hydroxy-3-oxobutyl phosphate; it reads GT. His89 (proton donor) is an active-site residue. Phe114 contributes to the 5-amino-6-(D-ribitylamino)uracil binding site. Arg128 is a binding site for (2S)-2-hydroxy-3-oxobutyl phosphate.

Belongs to the DMRL synthase family. As to quaternary structure, forms an icosahedral capsid composed of 60 subunits, arranged as a dodecamer of pentamers.

It carries out the reaction (2S)-2-hydroxy-3-oxobutyl phosphate + 5-amino-6-(D-ribitylamino)uracil = 6,7-dimethyl-8-(1-D-ribityl)lumazine + phosphate + 2 H2O + H(+). The protein operates within cofactor biosynthesis; riboflavin biosynthesis; riboflavin from 2-hydroxy-3-oxobutyl phosphate and 5-amino-6-(D-ribitylamino)uracil: step 1/2. Catalyzes the formation of 6,7-dimethyl-8-ribityllumazine by condensation of 5-amino-6-(D-ribitylamino)uracil with 3,4-dihydroxy-2-butanone 4-phosphate. This is the penultimate step in the biosynthesis of riboflavin. This is 6,7-dimethyl-8-ribityllumazine synthase from Cronobacter sakazakii (strain ATCC BAA-894) (Enterobacter sakazakii).